Reading from the N-terminus, the 385-residue chain is Succinate--CoA ligase [ADP-forming] subunit beta (385 aa).

The region spanning 9–237 (KEILRQFGVN…LEAEHPLEIE (229 aa)) is the ATP-grasp domain. ATP is bound by residues lysine 45, 52–54 (GRG), valine 94, and glutamate 101. Residues asparagine 192 and aspartate 206 each coordinate Mg(2+). Residues asparagine 257 and 314-316 (GIT) each bind substrate.

The protein belongs to the succinate/malate CoA ligase beta subunit family. As to quaternary structure, heterotetramer of two alpha and two beta subunits. Mg(2+) serves as cofactor.

It catalyses the reaction succinate + ATP + CoA = succinyl-CoA + ADP + phosphate. It carries out the reaction GTP + succinate + CoA = succinyl-CoA + GDP + phosphate. The protein operates within carbohydrate metabolism; tricarboxylic acid cycle; succinate from succinyl-CoA (ligase route): step 1/1. Succinyl-CoA synthetase functions in the citric acid cycle (TCA), coupling the hydrolysis of succinyl-CoA to the synthesis of either ATP or GTP and thus represents the only step of substrate-level phosphorylation in the TCA. The beta subunit provides nucleotide specificity of the enzyme and binds the substrate succinate, while the binding sites for coenzyme A and phosphate are found in the alpha subunit. This Deinococcus deserti (strain DSM 17065 / CIP 109153 / LMG 22923 / VCD115) protein is Succinate--CoA ligase [ADP-forming] subunit beta.